The following is a 249-amino-acid chain: MNLVQDKVTIITGGTRGIGFAAAKIFIDNGAKVSIFGETQEEVDTALAQLKELYPEEEVLGFAPDLTSRDAVMAAVGQVAQKYGRLDVMINNAGITSNNVFSRVSEEEFKHIMDINVTGVFNGAWCAYQCMKDAKKGVIINTASVTGIFGSLSGVGYPASKASVIGLTHGLGREIIRKNIRVVGVAPGVVNTDMTNGNPPEIMEGYLKALPMKRMLEPEEIANVYLFLASDLASGITATTVSVDGAYRP.

Residues 15 to 18 (TRGI), glutamate 38, glutamate 42, and asparagine 92 contribute to the NAD(+) site. Serine 144 is a binding site for substrate. Catalysis depends on proton donor/acceptor residues tyrosine 157 and lysine 161. Residues lysine 161 and 190–192 (VNT) contribute to the NAD(+) site.

Belongs to the short-chain dehydrogenases/reductases (SDR) family. In terms of assembly, homotetramer.

The enzyme catalyses a 3alpha-hydroxy bile acid CoA + NAD(+) = a 3-oxo bile acid CoA + NADH + H(+). It carries out the reaction choloyl-CoA + NAD(+) = 7alpha,12alpha-dihydroxy-3-oxochol-24-oyl-CoA + NADH + H(+). The catalysed reaction is chenodeoxycholoyl-CoA + NAD(+) = 7alpha-hydroxy-3-oxochol-24-oyl-CoA + NADH + H(+). It catalyses the reaction deoxycholoyl-CoA + NAD(+) = 12alpha-hydroxy-3-oxocholan-24-oyl-CoA + NADH + H(+). The enzyme catalyses lithocholoyl-CoA + NAD(+) = 3-oxocholan-24-oyl-CoA + NADH + H(+). The protein operates within lipid metabolism; bile acid biosynthesis. In terms of biological role, involved in the multi-step bile acid 7alpha-dehydroxylation pathway that transforms primary bile acids to secondary bile acids in the human gut. Catalyzes the oxidation of C3-hydroxyl group of CoA conjugated bile acids generating a C3-oxo bile acid intermediate. Can use choloyl-CoA, chenodeoxycholoyl-CoA, deoxycholoyl-CoA, and lithocholoyl-CoA as substrates with similar efficiency. Highly prefers NAD over NADP as cosubstrate. Also catalyzes the reverse reactions; in vitro, the preferred direction of reaction depends on the pH. Has very little activity with unconjugated (non-CoA) bile acid substrates. The chain is 3alpha-hydroxy bile acid-CoA-ester 3-dehydrogenase 2 (baiA2) from Clostridium scindens (strain JCM 10418 / VPI 12708).